The sequence spans 636 residues: Polyadenylate-binding protein 1 (636 aa).

Methionine 1 bears the N-acetylmethionine mark. RRM domains follow at residues 11–89, 99–175, 191–268, and 294–370; these read ASLY…WSQR, GNIF…RFKS, TNVY…RAQK, and VNLY…LAQR. Residues 166–289 are CSDE1-binding; that stretch reads RKVFVGRFKS…FEQMKQDRIT (124 aa). Lysine 299 is modified (N6-methyllysine). At serine 315 the chain carries Phosphoserine. Threonine 319 carries the post-translational modification Phosphothreonine. Omega-N-methylarginine occurs at positions 385, 419, 432, and 436. Arginine 455 and arginine 460 each carry omega-N-methylated arginine; by CARM1. An omega-N-methylarginine mark is found at arginine 475 and arginine 481. The residue at position 493 (arginine 493) is an Asymmetric dimethylarginine; alternate. Arginine 493 bears the Dimethylated arginine; alternate mark. Residue arginine 493 is modified to Omega-N-methylarginine; alternate. Position 506 is an omega-N-methylarginine (arginine 506). Lysine 512 carries the N6-acetyllysine modification. Arginine 518 is modified (omega-N-methylarginine). Positions 542 to 619 constitute a PABC domain; the sequence is QEPLTASMLA…AVAVLQAHQA (78 aa).

The protein belongs to the polyadenylate-binding protein type-1 family. In terms of assembly, may form homodimers. Component of a multisubunit autoregulatory ribonucleoprotein complex (ARC), at least composed of IGF2BP1, PABPC1 and CSDE1. Directly interacts with IGF2BP1. Part of a complex associated with the FOS mCRD domain and consisting of HNRPD, SYNCRIP, PAIP1 and CSDE1/UNR. Interacts with PAIP1 and PAIP2 (via the PABPC1-interacting motifs PAM1 and PAM2). Interacts with PAIP1 with a 1:1 stoichiometry and with PAIP2 with a 1:2 stoichiometry. The interaction with CSDE1 is direct and RNA-independent. Found in a mRNP complex with YBX2. Interacts with TENT2/GLD2. Identified in the spliceosome C complex. Identified in a mRNP complex, at least composed of DHX9, DDX3X, ELAVL1, HNRNPU, IGF2BP1, ILF3, PABPC1, PCBP2, PTBP2, STAU1, STAU2, SYNCRIP and YBX1. The interaction with DDX3X is direct and RNA-independent. This interaction increases in stressed cells and decreases during cell recovery. Identified in a IGF2BP1-dependent mRNP granule complex containing untranslated mRNAs. Interacts with NXF1/TAP. Interacts with PIWIL1. Interacts with AGO1, AGO2, GSPT1 and GSPT2. Interacts with LARP4B. Interacts (via the second and third RRM domains and the C-terminus) with PAIP2B (via central acidic portion and C-terminus). Forms a complex with LARP1 and SHFL. Interacts with LARP4. Interacts with ZFC3H1 in a RNase-sensitive manner. Interacts with TRIM71 (via NHL repeats) in an RNA-dependent manner. Interacts with TENT5C; the interaction has no effect on TENT5C poly(A) polymerase function. Interacts with G3BP1 and G3BP2. Interacts with ENDOV; the interaction is RNA-dependent and stimulates ENDOV activity. Interacts with UPF1; the interaction is RNA-dependent. Interacts with IGF2BP2 and IGF2BP3. May interact with SETX. Interacts with RBM46. Interacts with PAN3. In terms of processing, phosphorylated by MAPKAPK2. Methylated by CARM1. Arg-493 is dimethylated, probably to asymmetric dimethylarginine.

The protein localises to the cytoplasm. It is found in the stress granule. The protein resides in the nucleus. It localises to the cell projection. Its subcellular location is the lamellipodium. In terms of biological role, binds the poly(A) tail of mRNA, including that of its own transcript, and regulates processes of mRNA metabolism such as pre-mRNA splicing and mRNA stability. Its function in translational initiation regulation can either be enhanced by PAIP1 or repressed by PAIP2. Can probably bind to cytoplasmic RNA sequences other than poly(A) in vivo. Binds to N6-methyladenosine (m6A)-containing mRNAs and contributes to MYC stability by binding to m6A-containing MYC mRNAs. Involved in translationally coupled mRNA turnover. Implicated with other RNA-binding proteins in the cytoplasmic deadenylation/translational and decay interplay of the FOS mRNA mediated by the major coding-region determinant of instability (mCRD) domain. Involved in regulation of nonsense-mediated decay (NMD) of mRNAs containing premature stop codons; for the recognition of premature termination codons (PTC) and initiation of NMD a competitive interaction between UPF1 and PABPC1 with the ribosome-bound release factors is proposed. By binding to long poly(A) tails, may protect them from uridylation by ZCCHC6/ZCCHC11 and hence contribute to mRNA stability. The chain is Polyadenylate-binding protein 1 (PABPC1) from Bos taurus (Bovine).